We begin with the raw amino-acid sequence, 502 residues long: MLKEFKEQRLNEIQELRSMGIEPYPYKFEKELTAREIREKYDYLQAGEVLESEKLSFAGRVMSIRHHGKTAFFHMKDDTGRIQAYVRADSVGKEKMDLFKRHVKIGDFIGVRGFPFKSKTGELTIYVQEYTLLSKALRPLPEKWHGIKDKEIIYRQRYLELIVSDEAIERFRKRFKAVQVIREFLNSRGFIEVETPILHYVTGGAEARPFVTHLNVFDIDMYLRIAPELYLKRLIIGGFEKIYEIGKNFRNEGISYKHSPEFTSIEIYQAYADYNDMMDLTEELIVEVVKRTCGTLKISYQGKEIDFTPPWKRVRMRDFLKEKLGVDILEDPDEVLLKKLEEYGVELEIKNRAHLIDKLRDLVEEELVNPTFIIDHPVVISPLAKRHREDPRLTERFELIIFGREIANAFSELNDPVDQYQRFLEQAKMREEGDEEAHMMDLDFVRALEYGMPPTGGLGIGLDRLFMFITDSPTIRDVIPFPIVKPKKFEEEEAEFEGGFEE.

Mg(2+) contacts are provided by glutamate 398 and glutamate 405.

Belongs to the class-II aminoacyl-tRNA synthetase family. Homodimer. Mg(2+) is required as a cofactor.

It localises to the cytoplasm. It carries out the reaction tRNA(Lys) + L-lysine + ATP = L-lysyl-tRNA(Lys) + AMP + diphosphate. This chain is Lysine--tRNA ligase, found in Thermotoga sp. (strain RQ2).